A 400-amino-acid polypeptide reads, in one-letter code: uncharacterized protein (400 aa).

This sequence belongs to the mimivirus R640 family.

The protein localises to the virion. This is an uncharacterized protein from Acanthamoeba polyphaga (Amoeba).